A 533-amino-acid polypeptide reads, in one-letter code: Glucose-6-phosphate isomerase (533 aa).

The active-site Proton donor is glutamate 322. Active-site residues include histidine 351 and lysine 455.

Belongs to the GPI family.

The protein resides in the cytoplasm. The enzyme catalyses alpha-D-glucose 6-phosphate = beta-D-fructose 6-phosphate. It functions in the pathway carbohydrate biosynthesis; gluconeogenesis. The protein operates within carbohydrate degradation; glycolysis; D-glyceraldehyde 3-phosphate and glycerone phosphate from D-glucose: step 2/4. Its function is as follows. Catalyzes the reversible isomerization of glucose-6-phosphate to fructose-6-phosphate. The sequence is that of Glucose-6-phosphate isomerase from Desulfitobacterium hafniense (strain DSM 10664 / DCB-2).